The following is a 1597-amino-acid chain: Pentafunctional AROM polypeptide (1597 aa).

Residues 1–384 (MGVPTKISIL…HEPRASTVSN (384 aa)) form a 3-dehydroquinate synthase region. NAD(+) contacts are provided by residues 44 to 46 (DTN), 81 to 84 (ESSK), 114 to 116 (GGV), and D119. R130 contacts 7-phospho-2-dehydro-3-deoxy-D-arabino-heptonate. Residue 139–140 (TT) participates in NAD(+) binding. 7-phospho-2-dehydro-3-deoxy-D-arabino-heptonate contacts are provided by D146 and K152. NAD(+) is bound at residue K161. 7-phospho-2-dehydro-3-deoxy-D-arabino-heptonate is bound at residue N162. NAD(+) is bound by residues 179–182 (FLNT) and N190. E194 serves as a coordination point for Zn(2+). Residues 194 to 197 (EVIK) and K250 each bind 7-phospho-2-dehydro-3-deoxy-D-arabino-heptonate. Catalysis depends on E260, which acts as the Proton acceptor; for 3-dehydroquinate synthase activity. 7-phospho-2-dehydro-3-deoxy-D-arabino-heptonate-binding positions include 264–268 (RNLLN) and H271. Position 271 (H271) interacts with Zn(2+). Residue H275 is the Proton acceptor; for 3-dehydroquinate synthase activity of the active site. 7-phospho-2-dehydro-3-deoxy-D-arabino-heptonate contacts are provided by H287 and K356. H287 lines the Zn(2+) pocket. The tract at residues 397–842 (VSPGVPKNLN…WDSLAQTFKV (446 aa)) is EPSP synthase. The active-site For EPSP synthase activity is the C824. A shikimate kinase region spans residues 866-1057 (ASIFIIGMRG…RSKENTFFVS (192 aa)). 872 to 879 (GMRGAGKT) provides a ligand contact to ATP. Positions 1058 to 1278 (LTLPDLAPAA…AAPGQLSARE (221 aa)) are 3-dehydroquinase. The active-site Proton acceptor; for 3-dehydroquinate dehydratase activity is H1181. K1209 serves as the catalytic Schiff-base intermediate with substrate; for 3-dehydroquinate dehydratase activity. The interval 1291–1597 (SKKFAVIGNP…VQPKDDDIST (307 aa)) is shikimate dehydrogenase.

This sequence in the N-terminal section; belongs to the sugar phosphate cyclases superfamily. Dehydroquinate synthase family. The protein in the 2nd section; belongs to the EPSP synthase family. In the 3rd section; belongs to the shikimate kinase family. It in the 4th section; belongs to the type-I 3-dehydroquinase family. This sequence in the C-terminal section; belongs to the shikimate dehydrogenase family. As to quaternary structure, homodimer. Zn(2+) is required as a cofactor.

It is found in the cytoplasm. The catalysed reaction is 7-phospho-2-dehydro-3-deoxy-D-arabino-heptonate = 3-dehydroquinate + phosphate. It catalyses the reaction 3-dehydroquinate = 3-dehydroshikimate + H2O. It carries out the reaction shikimate + NADP(+) = 3-dehydroshikimate + NADPH + H(+). The enzyme catalyses shikimate + ATP = 3-phosphoshikimate + ADP + H(+). The catalysed reaction is 3-phosphoshikimate + phosphoenolpyruvate = 5-O-(1-carboxyvinyl)-3-phosphoshikimate + phosphate. It functions in the pathway metabolic intermediate biosynthesis; chorismate biosynthesis; chorismate from D-erythrose 4-phosphate and phosphoenolpyruvate: step 2/7. The protein operates within metabolic intermediate biosynthesis; chorismate biosynthesis; chorismate from D-erythrose 4-phosphate and phosphoenolpyruvate: step 3/7. Its pathway is metabolic intermediate biosynthesis; chorismate biosynthesis; chorismate from D-erythrose 4-phosphate and phosphoenolpyruvate: step 4/7. It participates in metabolic intermediate biosynthesis; chorismate biosynthesis; chorismate from D-erythrose 4-phosphate and phosphoenolpyruvate: step 5/7. It functions in the pathway metabolic intermediate biosynthesis; chorismate biosynthesis; chorismate from D-erythrose 4-phosphate and phosphoenolpyruvate: step 6/7. The AROM polypeptide catalyzes 5 consecutive enzymatic reactions in prechorismate polyaromatic amino acid biosynthesis. The sequence is that of Pentafunctional AROM polypeptide from Blastomyces gilchristii (strain SLH14081) (Blastomyces dermatitidis).